The primary structure comprises 508 residues: Lysine--tRNA ligase (508 aa).

E418 and E425 together coordinate Mg(2+).

It belongs to the class-II aminoacyl-tRNA synthetase family. In terms of assembly, homodimer. It depends on Mg(2+) as a cofactor.

It is found in the cytoplasm. It catalyses the reaction tRNA(Lys) + L-lysine + ATP = L-lysyl-tRNA(Lys) + AMP + diphosphate. The chain is Lysine--tRNA ligase from Burkholderia cenocepacia (strain HI2424).